The sequence spans 459 residues: Siroheme synthase 2 (459 aa).

The tract at residues 1 to 204 (MDYLPIFCQL…EDRERVQQLT (204 aa)) is precorrin-2 dehydrogenase /sirohydrochlorin ferrochelatase. Residues 22–23 (EI) and 43–44 (LD) each bind NAD(+). Ser128 carries the phosphoserine modification. The interval 216–459 (GEVTLVGAGP…KLSWFSDQTA (244 aa)) is uroporphyrinogen-III C-methyltransferase. Position 225 (Pro225) interacts with S-adenosyl-L-methionine. Asp248 serves as the catalytic Proton acceptor. Lys270 serves as the catalytic Proton donor. S-adenosyl-L-methionine contacts are provided by residues 301-303 (GGD), Ile306, 331-332 (TA), Met382, and Gly411.

In the N-terminal section; belongs to the precorrin-2 dehydrogenase / sirohydrochlorin ferrochelatase family. This sequence in the C-terminal section; belongs to the precorrin methyltransferase family.

The catalysed reaction is uroporphyrinogen III + 2 S-adenosyl-L-methionine = precorrin-2 + 2 S-adenosyl-L-homocysteine + H(+). It catalyses the reaction precorrin-2 + NAD(+) = sirohydrochlorin + NADH + 2 H(+). The enzyme catalyses siroheme + 2 H(+) = sirohydrochlorin + Fe(2+). It functions in the pathway cofactor biosynthesis; adenosylcobalamin biosynthesis; precorrin-2 from uroporphyrinogen III: step 1/1. The protein operates within cofactor biosynthesis; adenosylcobalamin biosynthesis; sirohydrochlorin from precorrin-2: step 1/1. It participates in porphyrin-containing compound metabolism; siroheme biosynthesis; precorrin-2 from uroporphyrinogen III: step 1/1. Its pathway is porphyrin-containing compound metabolism; siroheme biosynthesis; siroheme from sirohydrochlorin: step 1/1. It functions in the pathway porphyrin-containing compound metabolism; siroheme biosynthesis; sirohydrochlorin from precorrin-2: step 1/1. Its function is as follows. Multifunctional enzyme that catalyzes the SAM-dependent methylations of uroporphyrinogen III at position C-2 and C-7 to form precorrin-2 via precorrin-1. Then it catalyzes the NAD-dependent ring dehydrogenation of precorrin-2 to yield sirohydrochlorin. Finally, it catalyzes the ferrochelation of sirohydrochlorin to yield siroheme. The protein is Siroheme synthase 2 of Pectobacterium atrosepticum (strain SCRI 1043 / ATCC BAA-672) (Erwinia carotovora subsp. atroseptica).